A 452-amino-acid polypeptide reads, in one-letter code: Scaffold protein ILK (452 aa).

M1 is subject to N-acetylmethionine. 5 ANK repeats span residues 2-30, 31-63, 64-96, 97-129, and 130-174; these read DDIF…LNQG, DDHG…INVM, NRGD…INAV, NEHG…VSIC, and NKYG…GTTR. Residues 33 to 139 form an interaction with LIMS1 region; the sequence is HGFSPLHWAC…NKYGEMPVDK (107 aa). The residue at position 173 (T173) is a Phosphothreonine; by PAK1. The segment at 180–212 is PH-like; mediates interaction with TGFB1I1; the sequence is GTLNKHSGIDFKQLNFLTKLNENHSGELWKGRW. S186 carries the phosphoserine modification. In terms of domain architecture, Protein kinase spans 193–446; the sequence is LNFLTKLNEN…PKFDMIVPIL (254 aa). Residues N200, N202, H203, S204, and K220 each coordinate ATP. S246 is subject to Phosphoserine; by PAK1. Positions 270, 272, and 279 each coordinate ATP. D339 serves as a coordination point for Mg(2+). K341 contributes to the ATP binding site. The Nuclear localization signal motif lies at 363-371; it reads KKPEDTNRR. K426 bears the N6-acetyllysine mark.

This sequence belongs to the protein kinase superfamily. TKL Ser/Thr protein kinase family. Component of the heterotrimeric IPP (ILK-PINCH-PARVIN) complex composed of ILK, LIMS1/PINCH and PARVA; the complex binds to F-actin via the C-terminal tail of LIMS1 and the N-terminal region of PARVA, promoting F-actin filament bundling. Formation of the IPP complex is dependent on protein kinase C and precedes integrin-mediated cell adhesion and spreading. ILK also interacts with LIMS2/PINCH2 and with PARVB and PARVG which may substitute for LIMS1 and PARVA in the IPP complex; PARVA and PARVB compete for the same binding site. Interaction with PARVG promotes the establishment of cell polarity required for leukocyte migration. Interacts with the cytoplasmic domain of integrin ITGB1 and may also interact with integrins ITGB2, ITGB3 and/or ITGB5. Interacts probably also with TGFB1I1. Interacts (via ANK repeats) with EPHA1 (via SAM domain); stimulated by EFNA1 but independent of the kinase activity of EPHA1. Interacts with FERMT2. Interacts with LIMD2; leading to activate the protein kinase activity. Interacts with PXN/PAXILLIN (via LD motif 4). Interacts with CCDC25 (via cytoplasmic region); initiating the ILK-PARVB cascade to induce cytoskeleton rearrangement and directional migration of cells. Interacts with IQGAP1; the interaction is required for localization of IQGAP1 to the cell cortex. Post-translationally, phosphorylation by PAK1 modulates ILK subcellular location by promoting its nuclear export. In terms of tissue distribution, highly expressed in heart followed by skeletal muscle, pancreas and kidney. Weakly expressed in placenta, lung and liver.

The protein resides in the cell junction. The protein localises to the focal adhesion. It localises to the cell membrane. Its subcellular location is the cell projection. It is found in the lamellipodium. The protein resides in the cytoplasm. The protein localises to the myofibril. It localises to the sarcomere. Its subcellular location is the nucleus. It is found in the cytoskeleton. The protein resides in the microtubule organizing center. The protein localises to the centrosome. It localises to the cell cortex. Functionally, scaffold protein which mediates protein-protein interactions during a range of cellular events including focal adhesion assembly, cell adhesion and cell migration. Regulates integrin-mediated signal transduction by contributing to inside-out integrin activation. Recruits PARVA and LIMS1/PITCH to form the heterotrimeric IPP (ILK-PINCH-PARVIN) complex which binds to F-actin via the C-terminal tail of LIMS1 and the N-terminal region of PARVA, promoting F-actin filament bundling, a process required to generate force for actin cytoskeleton reorganization and subsequent dynamic cell adhesion events such as cell spreading and migration. Binding to PARVA promotes effective assembly of ILK into focal adhesions while PARVA-bound ILK can simultaneously engage integrin-beta cytoplasmic tails to mediate cell adhesion. Plays a role with PARVG in promoting the cell adhesion and spreading of leukocytes. Acts as an upstream effector of both AKT1/PKB and GSK3. Mediates trafficking of caveolae to the cell surface in an ITGB1-dependent manner by promoting the recruitment of IQGAP1 to the cell cortex which cooperates with its effector DIAPH1 to locally stabilize microtubules and allow stable insertion of caveolae into the plasma membrane. Required for the maintenance of mitotic spindle integrity by promoting phosphorylation of TACC3 by AURKA. Associates with chromatin and may act as a negative regulator of transcription when located in the nucleus. The sequence is that of Scaffold protein ILK from Homo sapiens (Human).